The sequence spans 336 residues: MLQRGLWPWRTRLLPTPGTWRPARPWPLPPPPQVLRVKLCGNVKYYQSHHYSTVVPPDEITVIYRHGLPLVTLTLPSRKERCQFVVKPMLSTVGSFLQDLQNEDKGIKTAAIFTADGNMISASTLMDILLMNDFKLVINKIAYDVQCPKREKPSNEHTAEMEHMKSLVHRLFTILHLEESQKKREHHLLEKIDHLKEQLQPLEQVKAGIEAHSEAKTSGLLWAGLALLSIQGGALAWLTWWVYSWDIMEPVTYFITFANSMVFFAYFIVTRQDYTYSAVKSRQFLQFFHKKSKQQHFDVQQYNKLKEDLAKAKESLKQARHSLCLQMQVEELNEKN.

The transit peptide at 1–35 (MLQRGLWPWRTRLLPTPGTWRPARPWPLPPPPQVL) directs the protein to the mitochondrion. The stretch at 179–210 (ESQKKREHHLLEKIDHLKEQLQPLEQVKAGIE) forms a coiled coil. Helical transmembrane passes span 220–240 (LLWAGLALLSIQGGALAWLTW) and 250–270 (PVTYFITFANSMVFFAYFIVT). Residues 297 to 323 (FDVQQYNKLKEDLAKAKESLKQARHSL) are a coiled coil.

It belongs to the MCU (TC 1.A.77) family. Homooligomer. Associates with the uniplex complex, composed of MCU, MICU1, MICU2 and EMRE/SMDT1, inhibiting its activity.

The protein resides in the mitochondrion inner membrane. Functionally, negative regulator of the mitochondrial calcium uniporter (MCU), a channel that mediates calcium uptake into the mitochondrial matrix. MCUB is required to limit mitochondrial calcium overload during stress. Acts as a dominant-negative regulator that displaces MCU from the functional uniplex complex and thereby decreases the association of calcium sensors MICU1 and MICU2, preventing channel gating. Mitochondrial calcium homeostasis plays key roles in mitochondrial metabolism. Acts as an important regulator of mitochondrial metabolism in response to stress in muscle cells: induced in response to fasting, leading to restrict mitochondrial calcium uptake, resulting in reprogramming of mitochondria toward fatty acid oxidation preference. Acts as a regulator of macrophage polarization during skeletal muscle regeneration: inhibition of mitochondrial calcium uptake drives differentiation of macrophages with anti-inflammatory profile, promoting the differentiation and fusion of satellite cells. This Homo sapiens (Human) protein is Calcium uniporter regulatory subunit MCUb, mitochondrial.